Reading from the N-terminus, the 406-residue chain is Cysteine desulfurase (406 aa).

Lys-226 is subject to N6-(pyridoxal phosphate)lysine. The Cysteine persulfide intermediate role is filled by Cys-364.

The protein belongs to the class-V pyridoxal-phosphate-dependent aminotransferase family. Csd subfamily. As to quaternary structure, homodimer. Interacts with SufE and the SufBCD complex composed of SufB, SufC and SufD. The interaction with SufE is required to mediate the direct transfer of the sulfur atom from the S-sulfanylcysteine. Pyridoxal 5'-phosphate serves as cofactor.

The protein localises to the cytoplasm. It carries out the reaction (sulfur carrier)-H + L-cysteine = (sulfur carrier)-SH + L-alanine. It catalyses the reaction L-selenocysteine + AH2 = hydrogenselenide + L-alanine + A + H(+). It participates in cofactor biosynthesis; iron-sulfur cluster biosynthesis. Functionally, cysteine desulfurases mobilize the sulfur from L-cysteine to yield L-alanine, an essential step in sulfur metabolism for biosynthesis of a variety of sulfur-containing biomolecules. Component of the suf operon, which is activated and required under specific conditions such as oxidative stress and iron limitation. Acts as a potent selenocysteine lyase in vitro, that mobilizes selenium from L-selenocysteine. Selenocysteine lyase activity is however unsure in vivo. The polypeptide is Cysteine desulfurase (Escherichia coli O127:H6 (strain E2348/69 / EPEC)).